Reading from the N-terminus, the 434-residue chain is Glutamyl-tRNA reductase (434 aa).

Residues 49-52 (TCNR), Ser114, 119-121 (EPQ), and Gln125 contribute to the substrate site. Catalysis depends on Cys50, which acts as the Nucleophile. An NADP(+)-binding site is contributed by 199–204 (GAGETI).

The protein belongs to the glutamyl-tRNA reductase family. As to quaternary structure, homodimer.

The enzyme catalyses (S)-4-amino-5-oxopentanoate + tRNA(Glu) + NADP(+) = L-glutamyl-tRNA(Glu) + NADPH + H(+). Its pathway is porphyrin-containing compound metabolism; protoporphyrin-IX biosynthesis; 5-aminolevulinate from L-glutamyl-tRNA(Glu): step 1/2. In terms of biological role, catalyzes the NADPH-dependent reduction of glutamyl-tRNA(Glu) to glutamate 1-semialdehyde (GSA). In Pasteurella multocida (strain Pm70), this protein is Glutamyl-tRNA reductase.